The chain runs to 123 residues: uncharacterized protein (123 aa).

Residues 5 to 25 (GTLVIIFAIVLILCIMLLFFY) form a helical membrane-spanning segment. A disordered region spans residues 32–53 (KPSVLPPPIPPPTPPPSKKKYD). Pro residues predominate over residues 35–47 (VLPPPIPPPTPPP).

The protein belongs to the asfivirus CP123L family.

The protein resides in the host membrane. The protein localises to the virion. This is an uncharacterized protein from Ornithodoros (relapsing fever ticks).